A 43-amino-acid chain; its full sequence is ALNCASGWSGGYDQHCYKVFDIPPSWAADEKFCKQQTSGGHLV.

In terms of domain architecture, C-type lectin spans 1 to 43 (ALNCASGWSGGYDQHCYKVFDIPPSWAADEKFCKQQTSGGHLV). A disulfide bond links cysteine 4 and cysteine 16.

As to quaternary structure, heterodimer of subunits alpha and beta; disulfide-linked. Requires Ca(2+) as cofactor. In terms of processing, glycosylated. Expressed by the venom gland.

Its subcellular location is the secreted. Its function is as follows. Binds to the platelet GPIb/IX/V receptor system and inhibits ristocetin-induced platelet aggregation in human platelet-rich plasma. Strongly inhibits platelet aggregation induced by ADP, calcium ionophore, thrombin and collagen. Does not inhibit U46619-induced platelet aggregation. In Macrovipera lebetinus (Levantine viper), this protein is Snaclec lebecetin subunit beta.